A 255-amino-acid chain; its full sequence is Phosphoribosyl isomerase A (255 aa).

Catalysis depends on Asp21, which acts as the Proton acceptor. Asp140 (proton donor) is an active-site residue.

Belongs to the HisA/HisF family.

It localises to the cytoplasm. It carries out the reaction 1-(5-phospho-beta-D-ribosyl)-5-[(5-phospho-beta-D-ribosylamino)methylideneamino]imidazole-4-carboxamide = 5-[(5-phospho-1-deoxy-D-ribulos-1-ylimino)methylamino]-1-(5-phospho-beta-D-ribosyl)imidazole-4-carboxamide. The catalysed reaction is N-(5-phospho-beta-D-ribosyl)anthranilate = 1-(2-carboxyphenylamino)-1-deoxy-D-ribulose 5-phosphate. It functions in the pathway amino-acid biosynthesis; L-histidine biosynthesis; L-histidine from 5-phospho-alpha-D-ribose 1-diphosphate: step 4/9. Its pathway is amino-acid biosynthesis; L-tryptophan biosynthesis; L-tryptophan from chorismate: step 3/5. Functionally, involved in both the histidine and tryptophan biosynthetic pathways. In Mycolicibacterium vanbaalenii (strain DSM 7251 / JCM 13017 / BCRC 16820 / KCTC 9966 / NRRL B-24157 / PYR-1) (Mycobacterium vanbaalenii), this protein is Phosphoribosyl isomerase A.